The following is a 395-amino-acid chain: 3-sulfinopropanoyl-CoA desulfinase (395 aa).

FAD contacts are provided by residues 121–124, Ser130, and 153–156; these read ICIS and YWIT. Substrate is bound at residue 243-244; that stretch reads YN. FAD-binding positions include Arg272, Gln339, Ser343, 366-370, and Gln387; that span reads GGTAQ.

The protein belongs to the acyl-CoA dehydrogenase family. Homotrimer or homotetramer. FAD is required as a cofactor.

It catalyses the reaction 3-sulfinopropanoyl-CoA + H2O = propanoyl-CoA + sulfite + H(+). Its function is as follows. Catalyzes the conversion 3-sulfinopropanoyl-CoA (3SP-CoA) to propanoyl-CoA by abstraction of sulfite. Does not show dehydrogenase activity. This Cupriavidus necator (strain ATCC 43291 / DSM 13513 / CCUG 52238 / LMG 8453 / N-1) (Ralstonia eutropha) protein is 3-sulfinopropanoyl-CoA desulfinase.